A 493-amino-acid polypeptide reads, in one-letter code: Cobyric acid synthase (493 aa).

The 195-residue stretch at 246–440 (PIDIAVIKMP…IHGVFDGVAF (195 aa)) folds into the GATase cobBQ-type domain. Residue Cys326 is the Nucleophile of the active site. Residue His432 is part of the active site.

It belongs to the CobB/CobQ family. CobQ subfamily.

The protein operates within cofactor biosynthesis; adenosylcobalamin biosynthesis. In terms of biological role, catalyzes amidations at positions B, D, E, and G on adenosylcobyrinic A,C-diamide. NH(2) groups are provided by glutamine, and one molecule of ATP is hydrogenolyzed for each amidation. The sequence is that of Cobyric acid synthase from Clostridium botulinum (strain Loch Maree / Type A3).